The following is a 346-amino-acid chain: tRNA N6-adenosine threonylcarbamoyltransferase (346 aa).

Positions 111 and 115 each coordinate Fe cation. Residues 134 to 138 (LVSGG), Asp167, Gly180, and Asn279 each bind substrate. Asp307 contributes to the Fe cation binding site.

This sequence belongs to the KAE1 / TsaD family. It depends on Fe(2+) as a cofactor.

The protein localises to the cytoplasm. It carries out the reaction L-threonylcarbamoyladenylate + adenosine(37) in tRNA = N(6)-L-threonylcarbamoyladenosine(37) in tRNA + AMP + H(+). Its function is as follows. Required for the formation of a threonylcarbamoyl group on adenosine at position 37 (t(6)A37) in tRNAs that read codons beginning with adenine. Is involved in the transfer of the threonylcarbamoyl moiety of threonylcarbamoyl-AMP (TC-AMP) to the N6 group of A37, together with TsaE and TsaB. TsaD likely plays a direct catalytic role in this reaction. This is tRNA N6-adenosine threonylcarbamoyltransferase from Burkholderia ambifaria (strain ATCC BAA-244 / DSM 16087 / CCUG 44356 / LMG 19182 / AMMD) (Burkholderia cepacia (strain AMMD)).